A 461-amino-acid chain; its full sequence is Spermidine coumaroyl-CoA acyltransferase (461 aa).

Active-site proton acceptor residues include His-168 and Asp-393.

This sequence belongs to the plant acyltransferase family. Monomer. In terms of tissue distribution, mainly expressed in roots at low levels, specifically, in the root tip.

It carries out the reaction 2 (E)-4-coumaroyl-CoA + spermidine = N(1),N(8)-bis(coumaroyl)-spermidine + 2 CoA + 2 H(+). It functions in the pathway amine and polyamine metabolism; spermidine metabolism. Spermidine coumaroyl-CoA acyltransferase that mediates the conversion of spermidine into dicoumaroyl-spermidine. The polypeptide is Spermidine coumaroyl-CoA acyltransferase (Arabidopsis thaliana (Mouse-ear cress)).